We begin with the raw amino-acid sequence, 451 residues long: Proline--tRNA ligase (451 aa).

Belongs to the class-II aminoacyl-tRNA synthetase family. ProS type 2 subfamily. In terms of assembly, homodimer.

The protein resides in the cytoplasm. The enzyme catalyses tRNA(Pro) + L-proline + ATP = L-prolyl-tRNA(Pro) + AMP + diphosphate. Functionally, catalyzes the attachment of proline to tRNA(Pro) in a two-step reaction: proline is first activated by ATP to form Pro-AMP and then transferred to the acceptor end of tRNA(Pro). This chain is Proline--tRNA ligase, found in Ruegeria sp. (strain TM1040) (Silicibacter sp.).